The primary structure comprises 462 residues: Glycine--tRNA ligase (462 aa).

Substrate-binding residues include R98 and E174. Residues 206-208 (RNE), 216-221 (FRTREF), 290-291 (EL), and 334-337 (GADR) each bind ATP. 221–225 (FEQME) contributes to the substrate binding site. Residue 330-334 (EPSLG) participates in substrate binding.

Belongs to the class-II aminoacyl-tRNA synthetase family. In terms of assembly, homodimer.

The protein resides in the cytoplasm. It carries out the reaction tRNA(Gly) + glycine + ATP = glycyl-tRNA(Gly) + AMP + diphosphate. Its function is as follows. Catalyzes the attachment of glycine to tRNA(Gly). This chain is Glycine--tRNA ligase, found in Lachnospira eligens (strain ATCC 27750 / DSM 3376 / VPI C15-48 / C15-B4) (Eubacterium eligens).